A 474-amino-acid polypeptide reads, in one-letter code: Trehalose-6-phosphate synthase (474 aa).

Arg10 contributes to the D-glucose 6-phosphate binding site. 22 to 23 (GG) contacts UDP-alpha-D-glucose. The D-glucose 6-phosphate site is built by Tyr77 and Asp131. UDP-alpha-D-glucose-binding residues include Arg263 and Lys268. Arg301 contributes to the D-glucose 6-phosphate binding site. UDP-alpha-D-glucose-binding positions include Phe340 and 366 to 370 (LVAKE).

Belongs to the glycosyltransferase 20 family. In terms of assembly, homotetramer.

The catalysed reaction is D-glucose 6-phosphate + UDP-alpha-D-glucose = alpha,alpha-trehalose 6-phosphate + UDP + H(+). The protein operates within glycan biosynthesis; trehalose biosynthesis. Probably involved in the osmoprotection via the biosynthesis of trehalose. Catalyzes the transfer of glucose from UDP-alpha-D-glucose (UDP-Glc) to D-glucose 6-phosphate (Glc-6-P) to form trehalose-6-phosphate. Acts with retention of the anomeric configuration of the UDP-sugar donor. This is Trehalose-6-phosphate synthase from Enterobacter sp. (strain 638).